A 331-amino-acid polypeptide reads, in one-letter code: Ribosomal RNA small subunit methyltransferase H (331 aa).

S-adenosyl-L-methionine is bound by residues 49–51 (GGH), D68, L102, D116, and Q123.

Belongs to the methyltransferase superfamily. RsmH family.

It is found in the cytoplasm. The enzyme catalyses cytidine(1402) in 16S rRNA + S-adenosyl-L-methionine = N(4)-methylcytidine(1402) in 16S rRNA + S-adenosyl-L-homocysteine + H(+). Its function is as follows. Specifically methylates the N4 position of cytidine in position 1402 (C1402) of 16S rRNA. This is Ribosomal RNA small subunit methyltransferase H from Renibacterium salmoninarum (strain ATCC 33209 / DSM 20767 / JCM 11484 / NBRC 15589 / NCIMB 2235).